Here is a 608-residue protein sequence, read N- to C-terminus: UvrABC system protein C (608 aa).

Positions 15-93 (HQPGVYRMYN…IKQYLPKYNV (79 aa)) constitute a GIY-YIG domain. Positions 203–238 (RQVIQTLVKQMESASQSLNFEKAAIIRDQIQAMRRV) constitute a UVR domain.

It belongs to the UvrC family. Interacts with UvrB in an incision complex.

It is found in the cytoplasm. Functionally, the UvrABC repair system catalyzes the recognition and processing of DNA lesions. UvrC both incises the 5' and 3' sides of the lesion. The N-terminal half is responsible for the 3' incision and the C-terminal half is responsible for the 5' incision. The polypeptide is UvrABC system protein C (Aliivibrio fischeri (strain ATCC 700601 / ES114) (Vibrio fischeri)).